The primary structure comprises 124 residues: MPTIQQLIRTERQSSKAKTKSPALKSCPERRGVCTRVYTSTPKKPNSALRKVARVRLTSGFEVTAYIGGIGHNLQEHSVVLIRGGRVKDLPGVRYHIIRGTLDTAGVKDRRQSRSKYGAKTPKE.

The segment at 1–28 is disordered; it reads MPTIQQLIRTERQSSKAKTKSPALKSCP. Position 89 is a 3-methylthioaspartic acid (Asp-89). Residues 104-124 are disordered; sequence TAGVKDRRQSRSKYGAKTPKE.

It belongs to the universal ribosomal protein uS12 family. Part of the 30S ribosomal subunit. Contacts proteins S8 and S17. May interact with IF1 in the 30S initiation complex.

With S4 and S5 plays an important role in translational accuracy. Its function is as follows. Interacts with and stabilizes bases of the 16S rRNA that are involved in tRNA selection in the A site and with the mRNA backbone. Located at the interface of the 30S and 50S subunits, it traverses the body of the 30S subunit contacting proteins on the other side and probably holding the rRNA structure together. The combined cluster of proteins S8, S12 and S17 appears to hold together the shoulder and platform of the 30S subunit. The polypeptide is Small ribosomal subunit protein uS12 (Synechococcus sp. (strain WH7803)).